A 583-amino-acid chain; its full sequence is Sensor protein SrrB (583 aa).

Over 1-11 (MMSRLNSVVIK) the chain is Cytoplasmic. A helical membrane pass occupies residues 12 to 32 (LWLTIILIVTTVLILLSIALI). The Extracellular portion of the chain corresponds to 33–174 (TFMQYYFTQE…SIEDTNNAIT (142 aa)). A helical membrane pass occupies residues 175 to 195 (IITIITAVIFLTITTVFAFFL). The Cytoplasmic segment spans residues 196–583 (SSRITKPLRR…TFIIKLPKPE (388 aa)). The HAMP domain occupies 197–249 (SRITKPLRRLRDQATRVSEGDYSYKPSVTTKDEIGQLSQAFNQMSTEIEEHVD). Positions 366 to 583 (NVSHELRTPI…TFIIKLPKPE (218 aa)) constitute a Histidine kinase domain. At His-369 the chain carries Phosphohistidine; by autocatalysis.

The protein resides in the cell membrane. It carries out the reaction ATP + protein L-histidine = ADP + protein N-phospho-L-histidine.. Functionally, member of the two-component regulatory system SrrA/SrrB, which is involved in the global regulation of staphylococcal virulence factors in response to environmental oxygen levels as well as biofilm formation. Also plays an essential role in host-derived nitric oxide resistance by regulating hmp/flavohemoglobin, an enzyme that detoxifies nitric oxide by converting it to nitrate. Functions as a sensor protein kinase which is autophosphorylated at a histidine residue and transfers its phosphate group to SrrA. In turn, SrrA binds to the upstream promoter regions of the target genes to positively and negatively regulate their expression. The sequence is that of Sensor protein SrrB (srrB) from Staphylococcus aureus.